The following is a 219-amino-acid chain: Large ribosomal subunit protein bL25 (219 aa).

The tract at residues 195 to 219 (EETTTTETSNEPEVIKKGKKEEEEK) is disordered. Residues 197 to 206 (TTTTETSNEP) are compositionally biased toward low complexity. A compositionally biased stretch (basic and acidic residues) spans 207 to 219 (EVIKKGKKEEEEK).

This sequence belongs to the bacterial ribosomal protein bL25 family. CTC subfamily. In terms of assembly, part of the 50S ribosomal subunit; part of the 5S rRNA/L5/L18/L25 subcomplex. Contacts the 5S rRNA. Binds to the 5S rRNA independently of L5 and L18.

This is one of the proteins that binds to the 5S RNA in the ribosome where it forms part of the central protuberance. The protein is Large ribosomal subunit protein bL25 of Fervidobacterium nodosum (strain ATCC 35602 / DSM 5306 / Rt17-B1).